A 154-amino-acid chain; its full sequence is Transcriptional repressor NrdR (154 aa).

The disordered stretch occupies residues 1 to 22 (MECPNCHKNASRVIDSRPSDEN). A zinc finger lies at 3–34 (CPNCHKNASRVIDSRPSDENRAIRRRRECENC). Positions 49 to 139 (LLVVKNDGTR…IYRQFKDVSG (91 aa)) constitute an ATP-cone domain.

The protein belongs to the NrdR family. Requires Zn(2+) as cofactor.

In terms of biological role, negatively regulates transcription of bacterial ribonucleotide reductase nrd genes and operons by binding to NrdR-boxes. This chain is Transcriptional repressor NrdR, found in Lactobacillus johnsonii (strain CNCM I-12250 / La1 / NCC 533).